The following is a 299-amino-acid chain: Probable lipid kinase YegS (299 aa).

The DAGKc domain maps to 2–133 (AEFPASLLIL…IDMAQVNKQT (132 aa)). Residues Thr40, 66-72 (GDGTINE), and Thr95 contribute to the ATP site. Leu215, Asp218, and Leu220 together coordinate Mg(2+). The active-site Proton acceptor is the Glu271.

It belongs to the diacylglycerol/lipid kinase family. YegS lipid kinase subfamily. It depends on Mg(2+) as a cofactor. The cofactor is Ca(2+).

Its subcellular location is the cytoplasm. In terms of biological role, probably phosphorylates lipids; the in vivo substrate is unknown. This Escherichia coli O9:H4 (strain HS) protein is Probable lipid kinase YegS.